Reading from the N-terminus, the 425-residue chain is Dual-specificity RNA methyltransferase RlmN (425 aa).

Glu-136 (proton acceptor) is an active-site residue. Residues 142-389 (GDDRGTLCVS…VRTPRGRDIL (248 aa)) form the Radical SAM core domain. The cysteines at positions 149 and 392 are disulfide-linked. 3 residues coordinate [4Fe-4S] cluster: Cys-156, Cys-160, and Cys-163. Residues 218 to 219 (GE), Ser-250, 272 to 274 (SLH), and Asn-349 contribute to the S-adenosyl-L-methionine site. Cys-392 acts as the S-methylcysteine intermediate in catalysis.

It belongs to the radical SAM superfamily. RlmN family. [4Fe-4S] cluster is required as a cofactor.

It is found in the cytoplasm. The catalysed reaction is adenosine(2503) in 23S rRNA + 2 reduced [2Fe-2S]-[ferredoxin] + 2 S-adenosyl-L-methionine = 2-methyladenosine(2503) in 23S rRNA + 5'-deoxyadenosine + L-methionine + 2 oxidized [2Fe-2S]-[ferredoxin] + S-adenosyl-L-homocysteine. It catalyses the reaction adenosine(37) in tRNA + 2 reduced [2Fe-2S]-[ferredoxin] + 2 S-adenosyl-L-methionine = 2-methyladenosine(37) in tRNA + 5'-deoxyadenosine + L-methionine + 2 oxidized [2Fe-2S]-[ferredoxin] + S-adenosyl-L-homocysteine. In terms of biological role, specifically methylates position 2 of adenine 2503 in 23S rRNA and position 2 of adenine 37 in tRNAs. m2A2503 modification seems to play a crucial role in the proofreading step occurring at the peptidyl transferase center and thus would serve to optimize ribosomal fidelity. This is Dual-specificity RNA methyltransferase RlmN from Methylorubrum populi (strain ATCC BAA-705 / NCIMB 13946 / BJ001) (Methylobacterium populi).